The sequence spans 341 residues: Uroporphyrinogen decarboxylase (341 aa).

Substrate contacts are provided by residues 23-27 (RQAGR), Asp-73, Tyr-147, Ser-202, and His-318.

This sequence belongs to the uroporphyrinogen decarboxylase family. In terms of assembly, homodimer.

The protein localises to the cytoplasm. It catalyses the reaction uroporphyrinogen III + 4 H(+) = coproporphyrinogen III + 4 CO2. It functions in the pathway porphyrin-containing compound metabolism; protoporphyrin-IX biosynthesis; coproporphyrinogen-III from 5-aminolevulinate: step 4/4. Functionally, catalyzes the decarboxylation of four acetate groups of uroporphyrinogen-III to yield coproporphyrinogen-III. The polypeptide is Uroporphyrinogen decarboxylase (Novosphingobium aromaticivorans (strain ATCC 700278 / DSM 12444 / CCUG 56034 / CIP 105152 / NBRC 16084 / F199)).